Consider the following 768-residue polypeptide: Probable beta-glucosidase M (768 aa).

A signal peptide spans 1-19; it reads MHAIAGLTGLLAGVSLSYA. N25, N72, and N259 each carry an N-linked (GlcNAc...) asparagine glycan. D287 is an active-site residue. N-linked (GlcNAc...) asparagine glycans are attached at residues N315, N322, N394, N434, N472, N543, and N651.

This sequence belongs to the glycosyl hydrolase 3 family.

Its subcellular location is the secreted. The catalysed reaction is Hydrolysis of terminal, non-reducing beta-D-glucosyl residues with release of beta-D-glucose.. The protein operates within glycan metabolism; cellulose degradation. In terms of biological role, beta-glucosidases are one of a number of cellulolytic enzymes involved in the degradation of cellulosic biomass. Catalyzes the last step releasing glucose from the inhibitory cellobiose. In Aspergillus oryzae (strain ATCC 42149 / RIB 40) (Yellow koji mold), this protein is Probable beta-glucosidase M (bglM).